Reading from the N-terminus, the 218-residue chain is Small ribosomal subunit protein uS3c (218 aa).

Residues 47–118 (VQKNLKISSG…KLNITITRIA (72 aa)) form the KH type-2 domain.

This sequence belongs to the universal ribosomal protein uS3 family. In terms of assembly, part of the 30S ribosomal subunit.

It is found in the plastid. The protein resides in the chloroplast. This is Small ribosomal subunit protein uS3c (rps3) from Daucus carota (Wild carrot).